The chain runs to 952 residues: MDRIVIRGAREHNLKNISLELPRGKFIVITGVSGSGKSTLAFDTIYAEGQRRYVESLSSYARQFLGVMDKPEVESIEGLSPAISIDQKTTSHNPRSTVGTVTEIHDYLRLLFARVGQAFCPECGRPIEKQSASEITDRLLKRPPGTRAILMAPLVRGRKGEYRKLFQQLLKEGYARVRVDGVIYLLEEAQGLSLEKYEKHDIDLVIDRVVLKEEERPRIAEAVELALLRGEGLLRVLYPDTGEEELFSEKFACPEHGSVLEELEPRIFSFNSPYGACPACSGLGYRQEFDPELVVNPELSLAEGAILPWSRGRDTGRSYLWDRLRALAEHLGFDLKTPFKDLPEEAKRAVLYGLPEPFEVVFRRGGKETFRVEVRYEGVIPWLEKRYQESDSEGVREALEGFMSLRPCPACGGTRYKREVLSVKVAGRNIAEVSALPVREALAFFQGLEKTLPPFQAQIARPILREIVERLGFLVDVGLDYLTLDRAANTLSGGEAQRIRLATQVGSGLTGVLYVLDEPSIGLHPRDNQRLIRTLKRLRDLGNTLIVVEHDEETMRAADWIVDMGPGAGIHGGEVVAQGTLEDILKSPQSLTGAYLRGEKRIPVPKERRKGNGKWLVLKGARAHNLKNVTLRIPLGRFVAITGPSGSGKSTLVHDVLYAALAQRLMRAKTTPGPYEALEGVEHLDKVIEIDQSPIGRTPRSNPATYTGVFDEIRDLFAKTPEARKRGYGPGRFSFNVKGGRCEACGGDGTVKIEMLFLPDLYVPCEVCKGKRYNKETLEVKLRGKSIADVLDMTVEEALDFFQNVPSIARKLQLMVDVGLGYMKLGQPSPTLSGGEAQRIKLATELGRKATGRTLYILDEPTTGLHFDDVAKLLSVLHRLVDAGNTVVVIEHNLDVVKTADWVIDLGPEGGDRGGEIVAEGTPEEVALTGSPTGAFLARIPEIAARIGVAAD.

31-38 (GVSGSGKS) is a binding site for ATP. A C4-type zinc finger spans residues 253–280 (CPEHGSVLEELEPRIFSFNSPYGACPAC). ABC transporter domains follow at residues 309–591 (WSRG…PQSL) and 611–938 (GNGK…AFLA). 643 to 650 (GPSGSGKS) contacts ATP. The C4-type zinc-finger motif lies at 742 to 768 (CEACGGDGTVKIEMLFLPDLYVPCEVC).

Belongs to the ABC transporter superfamily. UvrA family. As to quaternary structure, forms a heterotetramer with UvrB during the search for lesions.

Its subcellular location is the cytoplasm. The UvrABC repair system catalyzes the recognition and processing of DNA lesions. UvrA is an ATPase and a DNA-binding protein. A damage recognition complex composed of 2 UvrA and 2 UvrB subunits scans DNA for abnormalities. When the presence of a lesion has been verified by UvrB, the UvrA molecules dissociate. The polypeptide is UvrABC system protein A (Thermus thermophilus (strain ATCC 27634 / DSM 579 / HB8)).